We begin with the raw amino-acid sequence, 442 residues long: ATP-dependent RNA helicase SUB2-2 (442 aa).

A Q motif motif is present at residues 58–86 (TGFKDFLLKPELARAIIDCGFEHPSEVQQ). One can recognise a Helicase ATP-binding domain in the interval 89 to 264 (IPQSIHGTDV…RRFLQNPLEI (176 aa)). An ATP-binding site is contributed by 102 to 109 (AKSGLGKT). The DECD box motif lies at 211–214 (DECD). The Helicase C-terminal domain occupies 292-437 (KLAQLLDDLE…EFPEEGIDPS (146 aa)).

The protein belongs to the DEAD box helicase family. DECD subfamily.

It is found in the nucleus. The catalysed reaction is ATP + H2O = ADP + phosphate + H(+). Its function is as follows. ATP-binding RNA helicase involved in transcription elongation and required for the export of mRNA out of the nucleus. SUB2 also plays a role in pre-mRNA splicing and spliceosome assembly. May be involved in rDNA and telomeric silencing, and maintenance of genome integrity. The polypeptide is ATP-dependent RNA helicase SUB2-2 (SUB2-2) (Vanderwaltozyma polyspora (strain ATCC 22028 / DSM 70294 / BCRC 21397 / CBS 2163 / NBRC 10782 / NRRL Y-8283 / UCD 57-17) (Kluyveromyces polysporus)).